Reading from the N-terminus, the 76-residue chain is Envelope small membrane protein (76 aa).

The Virion surface segment spans residues 1-16; sequence MYSFVSEETGTLIVNS. A helical membrane pass occupies residues 17-37; the sequence is VLLFLAFVVFLLVTLAILTAL. The Intravirion segment spans residues 38–76; that stretch reads RLCAYCCNIVNVSLVKPTVYVYSRVKNLNSSEGVPDLLV.

It belongs to the betacoronaviruses E protein family. In terms of assembly, homopentamer. Interacts with membrane protein M in the budding compartment of the host cell, which is located between endoplasmic reticulum and the Golgi complex. Interacts with Nucleoprotein.

The protein localises to the host Golgi apparatus membrane. Its function is as follows. Plays a central role in virus morphogenesis and assembly. Acts as a viroporin and self-assembles in host membranes forming pentameric protein-lipid pores that allow ion transport. Also plays a role in the induction of apoptosis. This Rhinolophus sinicus (Chinese rufous horseshoe bat) protein is Envelope small membrane protein.